A 243-amino-acid chain; its full sequence is Carboxy-S-adenosyl-L-methionine synthase (243 aa).

S-adenosyl-L-methionine is bound by residues Tyr-40, 65-67 (GCS), 90-91 (DN), 118-119 (DI), Asn-133, and Arg-200.

The protein belongs to the class I-like SAM-binding methyltransferase superfamily. Cx-SAM synthase family. Homodimer.

It catalyses the reaction prephenate + S-adenosyl-L-methionine = carboxy-S-adenosyl-L-methionine + 3-phenylpyruvate + H2O. Its function is as follows. Catalyzes the conversion of S-adenosyl-L-methionine (SAM) to carboxy-S-adenosyl-L-methionine (Cx-SAM). This is Carboxy-S-adenosyl-L-methionine synthase from Shewanella oneidensis (strain ATCC 700550 / JCM 31522 / CIP 106686 / LMG 19005 / NCIMB 14063 / MR-1).